The chain runs to 140 residues: Putative pre-16S rRNA nuclease (140 aa).

It belongs to the YqgF nuclease family.

Its subcellular location is the cytoplasm. Its function is as follows. Could be a nuclease involved in processing of the 5'-end of pre-16S rRNA. The polypeptide is Putative pre-16S rRNA nuclease (Halothermothrix orenii (strain H 168 / OCM 544 / DSM 9562)).